The chain runs to 116 residues: Spexin (116 aa).

The N-terminal stretch at 1 to 26 (MKGPSVLAVTAVVLLLVLSALENSSG) is a signal peptide. A propeptide spanning residues 27-35 (APQRLSEKR) is cleaved from the precursor. A Glutamine amide modification is found at glutamine 49. 2 propeptides span residues 50-116 (GRRF…LFNW) and 74-116 (PDLE…LFNW). A disordered region spans residues 52–77 (RFLSDQSRRKELADRPPPERRNPDLE). Residues 53-75 (FLSDQSRRKELADRPPPERRNPD) show a composition bias toward basic and acidic residues.

This sequence belongs to the spexin family.

Its subcellular location is the secreted. The protein localises to the extracellular space. It is found in the cytoplasmic vesicle. The protein resides in the secretory vesicle. In terms of biological role, plays a role as a central modulator of cardiovascular and renal function and nociception. Also plays a role in energy metabolism and storage. Inhibits adrenocortical cell proliferation with minor stimulation on corticosteroid release. Functionally, acts as a ligand for galanin receptors GALR2 and GALR3. Intracerebroventricular administration of the peptide induces an increase in arterial blood pressure, a decrease in both heart rate and renal excretion and delayed natriuresis. Intraventricular administration of the peptide induces antinociceptive activity. Also induces contraction of muscarinic-like stomach smooth muscles. Intraperitoneal administration of the peptide induces a reduction in food consumption and body weight. Inhibits long chain fatty acid uptake into adipocytes. Its function is as follows. Intracerebroventricular administration of the peptide induces a decrease in heart rate, but no change in arterial pressure, and an increase in urine flow rate. Intraventricular administration of the peptide induces antinociceptive activity. The polypeptide is Spexin (Spx) (Mus musculus (Mouse)).